The chain runs to 433 residues: Xylose isomerase (433 aa).

Active-site residues include His99 and Asp102. Positions 230, 266, 269, 294, 305, 307, and 337 each coordinate Mg(2+).

The protein belongs to the xylose isomerase family. As to quaternary structure, homotetramer. The cofactor is Mg(2+).

It is found in the cytoplasm. It catalyses the reaction alpha-D-xylose = alpha-D-xylulofuranose. This Cereibacter sphaeroides (strain ATCC 17023 / DSM 158 / JCM 6121 / CCUG 31486 / LMG 2827 / NBRC 12203 / NCIMB 8253 / ATH 2.4.1.) (Rhodobacter sphaeroides) protein is Xylose isomerase.